A 364-amino-acid polypeptide reads, in one-letter code: tRNA-specific 2-thiouridylase MnmA 1 (364 aa).

ATP-binding positions include 10–17 (GMSGGVDS) and methionine 36. The active-site Nucleophile is the cysteine 106. Cysteine 106 and cysteine 204 are joined by a disulfide. Glycine 130 is a binding site for ATP. The tract at residues 154–156 (KDQ) is interaction with tRNA. Cysteine 204 functions as the Cysteine persulfide intermediate in the catalytic mechanism. The interaction with tRNA stretch occupies residues 310 to 311 (RY).

This sequence belongs to the MnmA/TRMU family.

Its subcellular location is the cytoplasm. It carries out the reaction S-sulfanyl-L-cysteinyl-[protein] + uridine(34) in tRNA + AH2 + ATP = 2-thiouridine(34) in tRNA + L-cysteinyl-[protein] + A + AMP + diphosphate + H(+). Its function is as follows. Catalyzes the 2-thiolation of uridine at the wobble position (U34) of tRNA, leading to the formation of s(2)U34. The polypeptide is tRNA-specific 2-thiouridylase MnmA 1 (Caldanaerobacter subterraneus subsp. tengcongensis (strain DSM 15242 / JCM 11007 / NBRC 100824 / MB4) (Thermoanaerobacter tengcongensis)).